A 477-amino-acid polypeptide reads, in one-letter code: Small ribosomal subunit protein uS5m (477 aa).

Belongs to the universal ribosomal protein uS5 family. Component of the mitochondrial small ribosomal subunit (mt-SSU). Mature N.crassa 74S mitochondrial ribosomes consist of a small (37S) and a large (54S) subunit. The 37S small subunit contains a 16S ribosomal RNA (16S mt-rRNA) and 32 different proteins. The 54S large subunit contains a 23S rRNA (23S mt-rRNA) and 42 different proteins. uS3m, uS4m and uS5m form the narrow entry site of the mRNA channel.

It is found in the mitochondrion. In terms of biological role, component of the mitochondrial ribosome (mitoribosome), a dedicated translation machinery responsible for the synthesis of mitochondrial genome-encoded proteins, including at least some of the essential transmembrane subunits of the mitochondrial respiratory chain. The mitoribosomes are attached to the mitochondrial inner membrane and translation products are cotranslationally integrated into the membrane. This Neurospora crassa (strain ATCC 24698 / 74-OR23-1A / CBS 708.71 / DSM 1257 / FGSC 987) protein is Small ribosomal subunit protein uS5m (mrps5).